The sequence spans 314 residues: MHIKLANPRGFCAGVDRAIEIVNRALEVFGPPIYVRHEVVHNKFVVEDLRARGAVFVEELDQVPDDVIVIFSAHGVSKAVRDEAARRGLKVFDATCPLVTKVHMEVVRYSREGRECILIGHEGHPEVEGTMGQYDASNGGAIYLVEDEADVAELQVRNPDNLAFVTQTTLSMDDTSKVIDALRSKFPAIGGPRKDDICYATQNRQDAVKQLASECDVLLVVGSPNSSNSNRLRELAERMGTPAYLIDGAEDLKHEWFEGVKGIGITAGASAPEVLVRGVVEQLRAWGAAGETELDGRPENITFSMPKELRVKAL.

Cys-12 provides a ligand contact to [4Fe-4S] cluster. Positions 41 and 74 each coordinate (2E)-4-hydroxy-3-methylbut-2-enyl diphosphate. The dimethylallyl diphosphate site is built by His-41 and His-74. The isopentenyl diphosphate site is built by His-41 and His-74. Cys-96 contacts [4Fe-4S] cluster. His-124 is a (2E)-4-hydroxy-3-methylbut-2-enyl diphosphate binding site. His-124 lines the dimethylallyl diphosphate pocket. Residue His-124 participates in isopentenyl diphosphate binding. Residue Glu-126 is the Proton donor of the active site. A (2E)-4-hydroxy-3-methylbut-2-enyl diphosphate-binding site is contributed by Thr-168. Residue Cys-198 coordinates [4Fe-4S] cluster. Residues Ser-226, Ser-227, Asn-228, and Ser-270 each coordinate (2E)-4-hydroxy-3-methylbut-2-enyl diphosphate. Dimethylallyl diphosphate-binding residues include Ser-226, Ser-227, Asn-228, and Ser-270. Residues Ser-226, Ser-227, Asn-228, and Ser-270 each coordinate isopentenyl diphosphate.

The protein belongs to the IspH family. The cofactor is [4Fe-4S] cluster.

The catalysed reaction is isopentenyl diphosphate + 2 oxidized [2Fe-2S]-[ferredoxin] + H2O = (2E)-4-hydroxy-3-methylbut-2-enyl diphosphate + 2 reduced [2Fe-2S]-[ferredoxin] + 2 H(+). It catalyses the reaction dimethylallyl diphosphate + 2 oxidized [2Fe-2S]-[ferredoxin] + H2O = (2E)-4-hydroxy-3-methylbut-2-enyl diphosphate + 2 reduced [2Fe-2S]-[ferredoxin] + 2 H(+). The protein operates within isoprenoid biosynthesis; dimethylallyl diphosphate biosynthesis; dimethylallyl diphosphate from (2E)-4-hydroxy-3-methylbutenyl diphosphate: step 1/1. It participates in isoprenoid biosynthesis; isopentenyl diphosphate biosynthesis via DXP pathway; isopentenyl diphosphate from 1-deoxy-D-xylulose 5-phosphate: step 6/6. Functionally, catalyzes the conversion of 1-hydroxy-2-methyl-2-(E)-butenyl 4-diphosphate (HMBPP) into a mixture of isopentenyl diphosphate (IPP) and dimethylallyl diphosphate (DMAPP). Acts in the terminal step of the DOXP/MEP pathway for isoprenoid precursor biosynthesis. The sequence is that of 4-hydroxy-3-methylbut-2-enyl diphosphate reductase from Ectopseudomonas mendocina (strain ymp) (Pseudomonas mendocina).